The following is a 291-amino-acid chain: Ribosomal RNA small subunit methyltransferase H (291 aa).

Residues 31-33, aspartate 49, phenylalanine 76, aspartate 97, and glutamine 104 contribute to the S-adenosyl-L-methionine site; that span reads GGY.

The protein belongs to the methyltransferase superfamily. RsmH family.

Its subcellular location is the cytoplasm. It catalyses the reaction cytidine(1402) in 16S rRNA + S-adenosyl-L-methionine = N(4)-methylcytidine(1402) in 16S rRNA + S-adenosyl-L-homocysteine + H(+). Specifically methylates the N4 position of cytidine in position 1402 (C1402) of 16S rRNA. The polypeptide is Ribosomal RNA small subunit methyltransferase H (Anaplasma marginale (strain Florida)).